Here is a 143-residue protein sequence, read N- to C-terminus: Cofilin (143 aa).

Position 4 is a phosphoserine (S4). Residues 5 to 137 (GVAVADESLT…SYDSVLERVS (133 aa)) form the ADF-H domain.

The protein belongs to the actin-binding proteins ADF family. Interacts with actin and AIP1 in a ternary complex. The N-terminus is blocked.

It localises to the cytoplasm. The protein localises to the cytoskeleton. Its subcellular location is the nucleus matrix. Controls reversibly actin polymerization and depolymerization in a pH-sensitive manner. It has the ability to bind G- and F-actin in a 1:1 ratio of cofilin to actin. Binding to F-actin is regulated by tropomyosin. It is the major component of intranuclear and cytoplasmic actin rods. Required for accumulation of actin at the cell division site via depolymerizing actin at the cell ends. In association with myosin II has a role in the assembly of the contractile ring via severing actin filaments. Involved in the maintenance of the contractile ring once formed. In association with profilin and capping protein, has a role in the mitotic reorganization of the actin cytoskeleton. In effect, yeast cofilin increases the rate of actin polymerization by making new ends available for actin subunit addition. Such a protein complex is important for the polarized growth of yeast cells. This is Cofilin (COF1) from Saccharomyces cerevisiae (strain ATCC 204508 / S288c) (Baker's yeast).